Consider the following 648-residue polypeptide: Sodium/nucleoside cotransporter 1 (648 aa).

The Cytoplasmic segment spans residues 1–80 (MADNTQRQRE…ARSFCREHRQ (80 aa)). A helical membrane pass occupies residues 81–104 (LFGWICKGLLSTACLGFLMVACLL). At 105-109 (DLQRA) the chain is on the extracellular side. A helical transmembrane segment spans residues 110-128 (LALLIITCVVLVFLAYDLL). Residues 129 to 147 (KRLLGSKLRRCVKFQGHSC) lie on the Cytoplasmic side of the membrane. The helical transmembrane segment at 148 to 167 (LSLWLKRGLALAAGVGLILW) threads the bilayer. The Extracellular segment spans residues 168–178 (LSLDTAQRPEQ). The chain crosses the membrane as a helical span at residues 179–195 (LVSFAGICVFLVLLFAG). Residues 196 to 201 (SKHHRA) are Cytoplasmic-facing. A helical transmembrane segment spans residues 202-222 (VSWRAVSWGLGLQFVLGLFVI). Residues 223–261 (RTEPGFIAFQWLGDQIQVFLSYTEAGSSFVFGEALVKDV) lie on the Extracellular side of the membrane. Residues 262–283 (FAFQVLPIIIFFSCVMSVLYYL) traverse the membrane as a helical segment. Topologically, residues 284–294 (GLMQWVILKIA) are cytoplasmic. The chain crosses the membrane as a helical span at residues 295-318 (WLMQVTMGTSATETLSVAGNIFVS). Over 319 to 337 (QTEAPLLIRPYLADMTLSE) the chain is Extracellular. The helical transmembrane segment at 338-360 (VHVVMTGGYATIAGSLLGAYISF) threads the bilayer. The Cytoplasmic segment spans residues 361–366 (GIDAAS). The chain crosses the membrane as a helical span at residues 367-386 (LIAASVMAAPCALALSKLVY). At 387 to 423 (PEVEESKFRSENGVKLTYGDAQNLLEAASAGAAISVK) the chain is on the extracellular side. Residues 424–446 (VVANIAANLIAFLAVLAFVNAAL) traverse the membrane as a helical segment. At 447–457 (SWLGDMVDIQG) the chain is on the cytoplasmic side. A helical transmembrane segment spans residues 458-479 (LSFQLICSYVLRPVAFLMGVAW). Residues 480 to 534 (EDCPVVAELLGIKFFLNEFVAYQELSQYKQRRLAGAEEWLGDKKQWISVRAEILT) are Extracellular-facing. Residues 535 to 558 (TYALCGFANFSSIGIMLGGLTSLV) form a helical membrane-spanning segment. The Cytoplasmic segment spans residues 559-569 (PQRRSDFSQIV). A helical transmembrane segment spans residues 570–592 (LRALITGAFVSLLNACVAGILYV). The Extracellular portion of the chain corresponds to 593–648 (PRGVEVDCVSLLNQTVSSSSFEVYLCCRQVFQSTSSEFSQVALDNCCRFYNHTVCT). N-linked (GlcNAc...) asparagine glycosylation is found at asparagine 605 and asparagine 643.

The protein belongs to the concentrative nucleoside transporter (CNT) (TC 2.A.41) family. In terms of processing, N-glycosylated. N-glycosylation is required for localization to the plasma membrane and the transporter activity. Expressed predominantly in the brush-border membranes of the polarized epithelial cells of jejunum and renal cortical tubules and in the bile canalicular membranes of liver parenchymal cells.

It is found in the cell membrane. Its subcellular location is the apical cell membrane. The catalysed reaction is uridine(out) + Na(+)(out) = uridine(in) + Na(+)(in). The enzyme catalyses thymidine(out) + Na(+)(out) = thymidine(in) + Na(+)(in). It carries out the reaction cytidine(out) + Na(+)(out) = cytidine(in) + Na(+)(in). It catalyses the reaction adenosine(out) + Na(+)(out) = adenosine(in) + Na(+)(in). With respect to regulation, due to its high apparent affinity but slow transport, adenosine could act as a negative regulator of pyrimidine transport under some conditions. Its function is as follows. Sodium and pyrimidine nucleoside symporter of the plasma membrane that imports uridine, thymidine and cytidine into cells by coupling their transport to the transmembrane sodium electrochemical gradient. Also transports adenosine, an atypical substrate transported with high apparent affinity, but low maximum velocity. Therefore, exhibits the transport characteristics of the nucleoside transport system cit or N2 subtype (N2/cit). Involved in renal nucleoside (re)absorption. This Rattus norvegicus (Rat) protein is Sodium/nucleoside cotransporter 1.